A 151-amino-acid polypeptide reads, in one-letter code: Large ribosomal subunit protein bL9 (151 aa).

The protein belongs to the bacterial ribosomal protein bL9 family.

Functionally, binds to the 23S rRNA. In Rhodococcus erythropolis (strain PR4 / NBRC 100887), this protein is Large ribosomal subunit protein bL9.